A 416-amino-acid polypeptide reads, in one-letter code: Putative serine protease HhoB (416 aa).

The first 25 residues, 1 to 25 (MAIHLKASHLGVAVLLLLFGGAIGA), serve as a signal peptide directing secretion. The span at 35–53 (GQNHSSPDSPVNTSPQSLT) shows a compositional bias: polar residues. Residues 35–57 (GQNHSSPDSPVNTSPQSLTPAPV) form a disordered region. The PDZ domain occupies 320 to 398 (EMTKQLRTSG…PLAIAVKRGQ (79 aa)).

It belongs to the peptidase S1C family.

Functionally, a putative protease, its function overlaps that of the related putative proteases HtrA and HhoA. The polypeptide is Putative serine protease HhoB (hhoB) (Synechocystis sp. (strain ATCC 27184 / PCC 6803 / Kazusa)).